The following is a 176-amino-acid chain: MSEVPRFELRSKRKIGKKQKVDIFGDKDDESMLQIDCETDSLISESVSSTHSYEDYSKAYKELTLETPADVNDSASTIVDSVCEESWYDKTIKDEQTKEDKKTDKKLKRIEKVKENNQNDSMSLQIAQLSLRIQRIESETKLKTLDSAYNTIITQADNLTTPQKKSLISAILATMR.

The protein belongs to the rotavirus NSP5 family. Homodimer. Interacts with VP1. Interacts with VP2. Interacts with NSP2; this interaction leads to up-regulation of NSP5 hyperphosphorylation and formation of virus factories. Interacts with NSP6. In terms of processing, O-glycosylated.

The protein localises to the host cytoplasm. Functionally, plays an essential role in the viral genome replication. Participates, together with NSP2, in the formation of viral factories (viroplasms) which are large inclusions in the host cytoplasm where replication intermediates are assembled and viral RNA replication takes place. Orchestrates the recruitment of viroplasmic proteins such as capsid proteins to these factories. The sequence is that of Non-structural protein 5 from Homo sapiens (Human).